Consider the following 199-residue polypeptide: MFSGIIQEVARVDLIHHLRDSMEIGVFARKLIDVVPGSSFSVDGICLTLVKRQYELLFFDVTEETMAWTTIKDYTVGTMVNLERSVRLGDEIGGHFVSGHVCGIGTIIAIEKSYMFFKAPANLVPYILEKGFIAIDGISLTIARVKGDIFSVSLIPETRARTSLGYKQVGAHVNMEPDMMTKMQVDTIMRFHAEKEISK.

Lumazine-binding repeat units follow at residues 1-95 (MFSG…IGGH) and 96-188 (FVSG…VDTI). 2,4-dihydroxypteridine is bound by residues 4–6 (GII), 46–48 (CLT), 60–65 (DVTEET), 99–101 (GHV), K130, 139–141 (SLT), and 153–158 (SLIPET).

As to quaternary structure, homotrimer.

It catalyses the reaction 2 6,7-dimethyl-8-(1-D-ribityl)lumazine + H(+) = 5-amino-6-(D-ribitylamino)uracil + riboflavin. The protein operates within cofactor biosynthesis; riboflavin biosynthesis; riboflavin from 2-hydroxy-3-oxobutyl phosphate and 5-amino-6-(D-ribitylamino)uracil: step 2/2. Its function is as follows. Catalyzes the dismutation of two molecules of 6,7-dimethyl-8-ribityllumazine, resulting in the formation of riboflavin and 5-amino-6-(D-ribitylamino)uracil. In Chlamydia trachomatis serovar D (strain ATCC VR-885 / DSM 19411 / UW-3/Cx), this protein is Riboflavin synthase (ribE).